The sequence spans 186 residues: Adenine phosphoribosyltransferase (186 aa).

This sequence belongs to the purine/pyrimidine phosphoribosyltransferase family. In terms of assembly, homodimer.

Its subcellular location is the cytoplasm. The enzyme catalyses AMP + diphosphate = 5-phospho-alpha-D-ribose 1-diphosphate + adenine. Its pathway is purine metabolism; AMP biosynthesis via salvage pathway; AMP from adenine: step 1/1. Catalyzes a salvage reaction resulting in the formation of AMP, that is energically less costly than de novo synthesis. In Xanthomonas campestris pv. campestris (strain 8004), this protein is Adenine phosphoribosyltransferase.